We begin with the raw amino-acid sequence, 186 residues long: dCTP deaminase (186 aa).

106-111 (KSTYAR) contributes to the dCTP binding site. Glu-132 (proton donor/acceptor) is an active-site residue. 3 residues coordinate dCTP: Gln-151, Tyr-166, and Gln-176.

Belongs to the dCTP deaminase family. In terms of assembly, homotrimer.

The enzyme catalyses dCTP + H2O + H(+) = dUTP + NH4(+). It participates in pyrimidine metabolism; dUMP biosynthesis; dUMP from dCTP (dUTP route): step 1/2. In terms of biological role, catalyzes the deamination of dCTP to dUTP. This chain is dCTP deaminase, found in Nautilia profundicola (strain ATCC BAA-1463 / DSM 18972 / AmH).